The sequence spans 223 residues: uncharacterized protein (223 aa).

The protein to M.jannaschii MJ0575.

This is an uncharacterized protein from Methanocaldococcus jannaschii (strain ATCC 43067 / DSM 2661 / JAL-1 / JCM 10045 / NBRC 100440) (Methanococcus jannaschii).